The following is a 122-amino-acid chain: Putative protein adenylyltransferase MJ1547 (122 aa).

The short motif at 11-25 (GSYAKNEYTKRSDID) is the GSX(10)DXD motif element. D23, D25, and D48 together coordinate Mg(2+).

This sequence belongs to the MntA antitoxin family. Probably forms a complex with cognate toxin MJ1548. Mg(2+) is required as a cofactor.

It carries out the reaction L-tyrosyl-[protein] + ATP = O-(5'-adenylyl)-L-tyrosyl-[protein] + diphosphate. The catalysed reaction is O-(5'-adenylyl)-L-tyrosyl-[protein] + ATP = O-[5'-(adenylyl-(5'-&gt;3')-adenylyl)]-L-tyrosyl-[protein] + diphosphate. In terms of biological role, probable antitoxin component of a putative type VII toxin-antitoxin (TA) system. Neutralizes cognate toxic MJ1548 by di-AMPylation. The sequence is that of Putative protein adenylyltransferase MJ1547 from Methanocaldococcus jannaschii (strain ATCC 43067 / DSM 2661 / JAL-1 / JCM 10045 / NBRC 100440) (Methanococcus jannaschii).